The following is a 118-amino-acid chain: Heavy metal-associated isoprenylated plant protein 12 (118 aa).

The 65-residue stretch at 1–65 folds into the HMA domain; sequence MQVVVLKLDV…KICHTEFISV (65 aa). Residues 68-87 are disordered; it reads VKEPEKKKPDDPKKPETKPP. Basic and acidic residues predominate over residues 69–86; it reads KEPEKKKPDDPKKPETKP. Cysteine methyl ester is present on cysteine 115. A lipid anchor (S-farnesyl cysteine) is attached at cysteine 115. The propeptide at 116–118 is removed in mature form; sequence VTS.

It belongs to the HIPP family.

In terms of biological role, probable heavy-metal-binding protein. This chain is Heavy metal-associated isoprenylated plant protein 12, found in Arabidopsis thaliana (Mouse-ear cress).